The chain runs to 397 residues: MKKSNRKSPTRIDEKDDICVPDSKDPGELQNMLNGGEYAPFVSPPILESNFIQVNRRGESIYLHNRANWVTVGICSSNPTTKTPNVMLLAHLTPTAQKDSEPLFTSLLTSPSPENLVLTRFLPLQFVTLSVHDAENMRIKVKLVSGRAYYLQLCAPACKQEALFCQWVELISLLNKEKAKASKVSEVSSLSEITNSTDITGSVDIMDIAAFPAIQTSHLSTCSDPNNDVESVDFSEFTDITDVTDDTDIPENEVTEAPDINIVTEVTEVTDICGVTASSGVRVVFENDDILKAKQEEKEKMENILKSGCLRDTKSKNEFRESPKRVTISNLALTFEGERCFQTTLTPEEDETEKSKEMSDRPREIRTMDSESTTLKAEEPRSRRTDSDTSDKCKLLN.

Disordered regions lie at residues 1–24 (MKKS…PDSK) and 342–397 (QTTL…KLLN). Basic and acidic residues-rich tracts occupy residues 10-24 (TRID…PDSK), 353-369 (EKSK…RTMD), and 376-397 (KAEE…KLLN).

The protein belongs to the GARIN family. As to quaternary structure, interacts with CALM1.

Its subcellular location is the cell projection. It is found in the cilium. The protein resides in the flagellum. In terms of biological role, seems to play a role in sperm motility. This chain is Golgi-associated RAB2 interactor protein 2 (GARIN2), found in Bos taurus (Bovine).